Consider the following 147-residue polypeptide: D-aminoacyl-tRNA deacylase (147 aa).

Residues 136-137 carry the Gly-cisPro motif, important for rejection of L-amino acids motif; sequence GP.

Belongs to the DTD family. Homodimer.

The protein localises to the cytoplasm. It catalyses the reaction glycyl-tRNA(Ala) + H2O = tRNA(Ala) + glycine + H(+). The catalysed reaction is a D-aminoacyl-tRNA + H2O = a tRNA + a D-alpha-amino acid + H(+). Functionally, an aminoacyl-tRNA editing enzyme that deacylates mischarged D-aminoacyl-tRNAs. Also deacylates mischarged glycyl-tRNA(Ala), protecting cells against glycine mischarging by AlaRS. Acts via tRNA-based rather than protein-based catalysis; rejects L-amino acids rather than detecting D-amino acids in the active site. By recycling D-aminoacyl-tRNA to D-amino acids and free tRNA molecules, this enzyme counteracts the toxicity associated with the formation of D-aminoacyl-tRNA entities in vivo and helps enforce protein L-homochirality. The chain is D-aminoacyl-tRNA deacylase from Streptococcus equi subsp. zooepidemicus (strain H70).